A 576-amino-acid polypeptide reads, in one-letter code: N-acetylmuramoyl-L-alanine amidase (576 aa).

The first 21 residues, 1 to 21, serve as a signal peptide directing secretion; sequence MAQGVLWILLGLLLWSDPGTA. Asn77 is a glycosylation site (N-linked (GlcNAc...) asparagine). Ser239 carries the post-translational modification Phosphoserine. Asn274 and Asn322 each carry deamidated asparagine. N-linked (GlcNAc...) asparagine glycosylation occurs at Asn367. The region spanning 406 to 532 is the N-acetylmuramoyl-L-alanine amidase domain; the sequence is FLYVHHTYVP…RQLVRTDCPG (127 aa). Position 410 (His410) interacts with Zn(2+). Residues Cys419 and Cys425 are joined by a disulfide bond. A glycan (N-linked (GlcNAc...) asparagine) is linked at Asn485. Zn(2+) is bound by residues His522 and Cys530. The interval 550–576 is disordered; the sequence is KPRPARSVSKRSRREPPPRTLPATDLQ.

This sequence belongs to the N-acetylmuramoyl-L-alanine amidase 2 family. Zn(2+) is required as a cofactor. Strongly expressed in liver and fetal liver, and secreted into serum. Expressed to a much lesser extent in transverse colon, lymph nodes, heart, thymus, pancreas, descending colon, stomach and testis. Isoform 2 is not detected in the liver or serum.

It localises to the secreted. The protein resides in the membrane. It carries out the reaction Hydrolyzes the link between N-acetylmuramoyl residues and L-amino acid residues in certain cell-wall glycopeptides.. In terms of biological role, may play a scavenger role by digesting biologically active peptidoglycan (PGN) into biologically inactive fragments. Has no direct bacteriolytic activity. The chain is N-acetylmuramoyl-L-alanine amidase (PGLYRP2) from Homo sapiens (Human).